The chain runs to 415 residues: Probable beta-1,4-xylosyltransferase IRX10L (415 aa).

A topological domain (cytoplasmic) is located at residue Met-1. The helical; Signal-anchor for type II membrane protein transmembrane segment at 2–22 (KLSSCVLIFLLCNTFSSISAF) threads the bilayer. Residues 23-415 (RLSRSQPTER…AGPVADLKPW (393 aa)) lie on the Lumenal side of the membrane. 2 N-linked (GlcNAc...) asparagine glycosylation sites follow: Asn-142 and Asn-403.

Belongs to the glycosyltransferase 47 family. In terms of tissue distribution, present in the xylem and phloem, and, to a lower extent, in interfascicular cells. Expressed in the root tip, shoot apical meristem (SAM), xylem cells of roots and stems, and in the vasculature of roots, cotyledons and leaves.

The protein localises to the golgi apparatus membrane. Involved in the synthesis of the hemicellulose glucuronoxylan, a major component of secondary cell walls. Probably involved in the elongation of glucuronoxylan xylosyl backbone. This is Probable beta-1,4-xylosyltransferase IRX10L (IRX10L) from Arabidopsis thaliana (Mouse-ear cress).